We begin with the raw amino-acid sequence, 288 residues long: ATP synthase gamma chain (288 aa).

This sequence belongs to the ATPase gamma chain family. F-type ATPases have 2 components, CF(1) - the catalytic core - and CF(0) - the membrane proton channel. CF(1) has five subunits: alpha(3), beta(3), gamma(1), delta(1), epsilon(1). CF(0) has three main subunits: a, b and c.

It localises to the cell membrane. Its function is as follows. Produces ATP from ADP in the presence of a proton gradient across the membrane. The gamma chain is believed to be important in regulating ATPase activity and the flow of protons through the CF(0) complex. This chain is ATP synthase gamma chain, found in Symbiobacterium thermophilum (strain DSM 24528 / JCM 14929 / IAM 14863 / T).